A 96-amino-acid polypeptide reads, in one-letter code: Large ribosomal subunit protein uL23 (96 aa).

This sequence belongs to the universal ribosomal protein uL23 family. Part of the 50S ribosomal subunit. Contacts protein L29, and trigger factor when it is bound to the ribosome.

One of the early assembly proteins it binds 23S rRNA. One of the proteins that surrounds the polypeptide exit tunnel on the outside of the ribosome. Forms the main docking site for trigger factor binding to the ribosome. This chain is Large ribosomal subunit protein uL23, found in Caldicellulosiruptor bescii (strain ATCC BAA-1888 / DSM 6725 / KCTC 15123 / Z-1320) (Anaerocellum thermophilum).